A 628-amino-acid polypeptide reads, in one-letter code: Propionate--CoA ligase (628 aa).

This sequence belongs to the ATP-dependent AMP-binding enzyme family.

The enzyme catalyses propanoate + ATP + CoA = propanoyl-CoA + AMP + diphosphate. The protein operates within organic acid metabolism; propanoate degradation. In terms of biological role, catalyzes the synthesis of propionyl-CoA from propionate and CoA. Also converts acetate to acetyl-CoA but with a lower specific activity. The protein is Propionate--CoA ligase (prpE) of Salmonella typhimurium (strain LT2 / SGSC1412 / ATCC 700720).